The chain runs to 224 residues: Probable GTP-binding protein EngB (224 aa).

One can recognise an EngB-type G domain in the interval 31–205 (IGVEIAFAGR…LSILNDWCHP (175 aa)). GTP contacts are provided by residues 39-46 (GRSNAGKS), 66-70 (GRTQL), 84-87 (DLPG), 151-154 (TKSD), and 184-186 (LSS). Mg(2+)-binding residues include Ser-46 and Thr-68.

This sequence belongs to the TRAFAC class TrmE-Era-EngA-EngB-Septin-like GTPase superfamily. EngB GTPase family. Requires Mg(2+) as cofactor.

In terms of biological role, necessary for normal cell division and for the maintenance of normal septation. The sequence is that of Probable GTP-binding protein EngB from Shewanella frigidimarina (strain NCIMB 400).